Here is a 470-residue protein sequence, read N- to C-terminus: ATP synthase subunit beta (470 aa).

148 to 155 (GGAGVGKT) contacts ATP.

Belongs to the ATPase alpha/beta chains family. In terms of assembly, F-type ATPases have 2 components, CF(1) - the catalytic core - and CF(0) - the membrane proton channel. CF(1) has five subunits: alpha(3), beta(3), gamma(1), delta(1), epsilon(1). CF(0) has three main subunits: a(1), b(2) and c(9-12). The alpha and beta chains form an alternating ring which encloses part of the gamma chain. CF(1) is attached to CF(0) by a central stalk formed by the gamma and epsilon chains, while a peripheral stalk is formed by the delta and b chains.

The protein resides in the cell inner membrane. The catalysed reaction is ATP + H2O + 4 H(+)(in) = ADP + phosphate + 5 H(+)(out). Functionally, produces ATP from ADP in the presence of a proton gradient across the membrane. The catalytic sites are hosted primarily by the beta subunits. This is ATP synthase subunit beta from Saccharophagus degradans (strain 2-40 / ATCC 43961 / DSM 17024).